The primary structure comprises 214 residues: Homeobox protein HEX homolog pha-2 (214 aa).

Disordered stretches follow at residues 1–50 (MDQK…QKME) and 180–214 (RRVR…LSHG). The segment covering 24–34 (SSESPIPTGSE) has biased composition (low complexity). The span at 35-44 (CSLNESSDTT) shows a compositional bias: polar residues. Residues 124 to 183 (RKGGQIRFTNEQTDALEHKFDSHKYLSPQERKKLAKSLSLSERQVKTWFQNRRAKWRRVR) constitute a DNA-binding region (homeobox). Positions 200–214 (SLGQLQSSNPFLSHG) are enriched in polar residues.

Its subcellular location is the nucleus. Its function is as follows. Transcriptional repressor. Involved in pharyngeal development and required for the formation of the pharyngeal isthmus. Plays a role in modulating cytoskeleton in the muscle cells of the isthmus. Regulates expression of the acetylcholinesterase genes ace-1 and ace-2. May regulate its own expression. The chain is Homeobox protein HEX homolog pha-2 from Caenorhabditis elegans.